A 388-amino-acid chain; its full sequence is Processive diacylglycerol beta-glucosyltransferase (388 aa).

The protein belongs to the glycosyltransferase 28 family. UgtP subfamily.

Its subcellular location is the cell membrane. It catalyses the reaction a 1,2-diacyl-3-O-(beta-D-glucopyranosyl)-sn-glycerol + UDP-alpha-D-glucose = a 1,2-diacyl-3-O-(beta-D-Glc-(1-&gt;6)-beta-D-Glc)-sn-glycerol + UDP + H(+). The catalysed reaction is a 1,2-diacyl-3-O-(beta-D-Glc-(1-&gt;6)-beta-D-Glc)-sn-glycerol + UDP-alpha-D-glucose = a 1,2-diacyl-3-O-(beta-D-Glc-(1-&gt;6)-beta-D-Glc-(1-&gt;6)-beta-D-Glc)-sn-glycerol + UDP + H(+). It carries out the reaction a 1,2-diacyl-sn-glycerol + UDP-alpha-D-glucose = a 1,2-diacyl-3-O-(beta-D-glucopyranosyl)-sn-glycerol + UDP + H(+). The protein operates within glycolipid metabolism; diglucosyl-diacylglycerol biosynthesis. Processive glucosyltransferase involved in the biosynthesis of both the bilayer- and non-bilayer-forming membrane glucolipids. Is able to successively transfer up to three glucosyl residues to diacylglycerol (DAG), thereby catalyzing the formation of beta-monoglucosyl-DAG (3-O-(beta-D-glucopyranosyl)-1,2-diacyl-sn-glycerol), beta-diglucosyl-DAG (3-O-(beta-D-glucopyranosyl-beta-(1-&gt;6)-D-glucopyranosyl)-1,2-diacyl-sn-glycerol) and beta-triglucosyl-DAG (3-O-(beta-D-glucopyranosyl-beta-(1-&gt;6)-D-glucopyranosyl-beta-(1-&gt;6)-D-glucopyranosyl)-1,2-diacyl-sn-glycerol). Beta-diglucosyl-DAG is the predominant glycolipid found in Bacillales and is also used as a membrane anchor for lipoteichoic acid (LTA). The sequence is that of Processive diacylglycerol beta-glucosyltransferase from Bacillus thuringiensis (strain Al Hakam).